Consider the following 165-residue polypeptide: UPF0254 protein MmarC7_0182 (165 aa).

This sequence belongs to the UPF0254 family.

This Methanococcus maripaludis (strain C7 / ATCC BAA-1331) protein is UPF0254 protein MmarC7_0182.